A 319-amino-acid chain; its full sequence is Putative antiporter CaxA (319 aa).

A run of 10 helical transmembrane segments spans residues 3 to 23, 38 to 58, 81 to 101, 105 to 125, 127 to 147, 175 to 195, 208 to 228, 250 to 270, 275 to 292, and 297 to 317; these read VATIFVLVGLVLLIWSADRFV, MIIGLTIVAMGSSAPEIMVSA, ILLVIGATALLKPIAVASMTI, FPLLILVTLLGYLFLADQSLT, AEGALFLGGFVLFLVLMVYWG, VWLVLGLALLLASSQLLVHGA, LIGLTIIAIGTSLPELAASLI, ILAVLGVGTIIAPGVIDAAAA, YVMMAATLALLLMSLRLG, and INRVEGCILLMAFIGYQYLLF.

It belongs to the Ca(2+):cation antiporter (CaCA) (TC 2.A.19) family.

The protein localises to the cell membrane. Its function is as follows. Confers modest Ca(2+) and Na(+) resistance. The chain is Putative antiporter CaxA (caxA) from Alkalimonas amylolytica.